A 347-amino-acid polypeptide reads, in one-letter code: D-alanine--D-alanine ligase (347 aa).

One can recognise an ATP-grasp domain in the interval 131–333; sequence KRVLESAGIA…YPELIERLVD (203 aa). ATP is bound at residue 161-216; sequence EEKLAYPVFTKPSNMGSSVGISKSENQEELRQALELAFRYDSRVLVEQGVNAREIE. The Mg(2+) site is built by D287, E300, and N302.

Belongs to the D-alanine--D-alanine ligase family. Mg(2+) is required as a cofactor. Mn(2+) serves as cofactor.

Its subcellular location is the cytoplasm. The catalysed reaction is 2 D-alanine + ATP = D-alanyl-D-alanine + ADP + phosphate + H(+). Its pathway is cell wall biogenesis; peptidoglycan biosynthesis. Functionally, cell wall formation. In Streptococcus pneumoniae (strain CGSP14), this protein is D-alanine--D-alanine ligase.